The primary structure comprises 221 residues: MLQNTVRCVSKLVQPITGVAAVRSKHSLPDLPYDYADLEPVISHEIMQLHHQKHHATYVNNLNQIEEKLHEAVSKGNVKEAIALQPALKFNGGGHINHSIFWTNLAKDGGEPSAELLTAIKSDFGSLDNLQKQLSASTVAVQGSGWGWLGYCPKGKILKVATCANQDPLEATTGLVPLFGIDVWEHAYYLQYKNVRPDYVNAIWKIANWKNVSERFAKAQQ.

Residues 1-24 constitute a mitochondrion transit peptide; that stretch reads MLQNTVRCVSKLVQPITGVAAVRS. Residues histidine 50, histidine 98, aspartate 182, and histidine 186 each coordinate Mn(2+).

It belongs to the iron/manganese superoxide dismutase family. In terms of assembly, homotetramer. The cofactor is Mn(2+).

It localises to the mitochondrion matrix. It catalyses the reaction 2 superoxide + 2 H(+) = H2O2 + O2. Destroys superoxide anion radicals which are normally produced within the cells and which are toxic to biological systems. The protein is Superoxide dismutase [Mn] 1, mitochondrial (sod-2) of Caenorhabditis elegans.